Consider the following 79-residue polypeptide: Antimicrobial peptide UyCT1 (79 aa).

An N-terminal signal peptide occupies residues 1 to 23 (MKTQLAFLAITVILMQLFAQTEA). Ile-37 is modified (isoleucine amide). Residues 41–79 (GLRNVDQIADLFDSGLSDADDLFDSGLSDADAKFMKMFM) constitute a propeptide that is removed on maturation.

It belongs to the non-disulfide-bridged peptide (NDBP) superfamily. Short antimicrobial peptide (group 4) family. In terms of tissue distribution, expressed by the venom gland.

Its subcellular location is the secreted. It is found in the target cell membrane. In terms of biological role, inhibits the growth of Gram-positive (S.aureus, MIC=15 uM) and Gram-negative bacteria (E.coli, MIC=10 uM and P.aeruginosa, MIC=10 uM). It also shows 26% of hemolysis when 15 uM are tested (81% at 50 uM). Functionally, inhibits the growth of Gram-negative bacteria (E.coli, MIC=25 uM and P.aeruginosa, MIC=40 uM). It also shows 7% of hemolysis when 50 uM are tested. Does not show activity against the Gram-positive bacteria S.aureus. This is Antimicrobial peptide UyCT1 from Urodacus yaschenkoi (Inland robust scorpion).